Here is a 247-residue protein sequence, read N- to C-terminus: Carboxy-S-adenosyl-L-methionine synthase (247 aa).

S-adenosyl-L-methionine is bound by residues tyrosine 40, glycine 65 to serine 67, aspartate 90 to asparagine 91, aspartate 122 to isoleucine 123, asparagine 137, and arginine 204.

This sequence belongs to the class I-like SAM-binding methyltransferase superfamily. Cx-SAM synthase family. As to quaternary structure, homodimer.

It catalyses the reaction prephenate + S-adenosyl-L-methionine = carboxy-S-adenosyl-L-methionine + 3-phenylpyruvate + H2O. Its function is as follows. Catalyzes the conversion of S-adenosyl-L-methionine (SAM) to carboxy-S-adenosyl-L-methionine (Cx-SAM). In Pseudomonas fluorescens (strain ATCC BAA-477 / NRRL B-23932 / Pf-5), this protein is Carboxy-S-adenosyl-L-methionine synthase.